The chain runs to 613 residues: Probable LRR receptor-like serine/threonine-protein kinase At5g10290 (613 aa).

The signal sequence occupies residues 1 to 31; the sequence is MRMFSLQKMAMAFTLLFFACLCSFVSPDAQG. At 32-225 the chain is on the extracellular side; the sequence is DALFALRISL…SGDSSKPKTG (194 aa). Residues N81 and N116 are each glycosylated (N-linked (GlcNAc...) asparagine). 4 LRR repeats span residues 95 to 117, 119 to 141, 143 to 166, and 167 to 189; these read NLKT…FGNL, SLTS…IGNL, KLQF…TGLP, and NLLN…LFEI. N155 carries N-linked (GlcNAc...) asparagine glycosylation. Residue N193 is glycosylated (N-linked (GlcNAc...) asparagine). The chain crosses the membrane as a helical span at residues 226 to 246; that stretch reads IIAGVVAGVTVVLFGILLFLF. At 247–613 the chain is on the cytoplasmic side; that stretch reads CKDRHKGYRR…QDAIELSGGR (367 aa). T287 is subject to Phosphothreonine. One can recognise a Protein kinase domain in the interval 290–569; sequence FSEKNVLGQG…VVRMLEGEGL (280 aa). An ATP-binding site is contributed by 296–304; sequence LGQGGFGKV. Residue T313 is modified to Phosphothreonine. An ATP-binding site is contributed by K318. S371 carries the post-translational modification Phosphoserine. Position 390 is a phosphothreonine (T390). D417 functions as the Proton acceptor in the catalytic mechanism. Phosphothreonine is present on residues T450, T451, and T456. Y464 is subject to Phosphotyrosine. S466 is modified (phosphoserine). Residue T467 is modified to Phosphothreonine. Position 471 is a phosphoserine (S471). T547 is subject to Phosphothreonine.

This sequence belongs to the protein kinase superfamily. Ser/Thr protein kinase family.

It is found in the cell membrane. The enzyme catalyses L-seryl-[protein] + ATP = O-phospho-L-seryl-[protein] + ADP + H(+). It catalyses the reaction L-threonyl-[protein] + ATP = O-phospho-L-threonyl-[protein] + ADP + H(+). The sequence is that of Probable LRR receptor-like serine/threonine-protein kinase At5g10290 from Arabidopsis thaliana (Mouse-ear cress).